We begin with the raw amino-acid sequence, 497 residues long: Probable zinc metalloprotease TRV_03476 (497 aa).

The N-terminal stretch at 1 to 24 (MRFLISSLLSGLALLTSLHAFVLA) is a signal peptide. Asn-100 and Asn-121 each carry an N-linked (GlcNAc...) asparagine glycan. Zn(2+) is bound by residues His-171, Asp-191, and Glu-227. Asn-242 carries an N-linked (GlcNAc...) asparagine glycan. Asp-254 is a binding site for Zn(2+). Residues 411-497 (MPRNVRVNTN…ERGVAVLPFP (87 aa)) form the Fibronectin type-III domain. Asn-424 is a glycosylation site (N-linked (GlcNAc...) asparagine).

This sequence belongs to the peptidase M28 family. M28B subfamily. It depends on Zn(2+) as a cofactor.

The protein resides in the secreted. This chain is Probable zinc metalloprotease TRV_03476, found in Trichophyton verrucosum (strain HKI 0517).